Consider the following 489-residue polypeptide: GTPase Der (489 aa).

2 consecutive EngA-type G domains span residues 3–166 and 201–374; these read PVVA…FDDV and IKLA…DSST. GTP is bound by residues 9-16, 56-60, 118-121, 207-214, 254-258, and 319-322; these read GRPNVGKS, DTGGI, NKTD, DTAGV, and NKWD. The KH-like domain occupies 375–459; sequence KRISTSILTR…PIRIEFREGT (85 aa).

The protein belongs to the TRAFAC class TrmE-Era-EngA-EngB-Septin-like GTPase superfamily. EngA (Der) GTPase family. As to quaternary structure, associates with the 50S ribosomal subunit.

Its function is as follows. GTPase that plays an essential role in the late steps of ribosome biogenesis. This chain is GTPase Der, found in Psychromonas ingrahamii (strain DSM 17664 / CCUG 51855 / 37).